An 834-amino-acid polypeptide reads, in one-letter code: Membrane-associated lipoprotein (834 aa).

The N-terminal stretch at 1 to 25 is a signal peptide; the sequence is MKKNKLTTLALILPITILTPIVIAS. A lipid anchor (N-palmitoyl cysteine) is attached at Cys-26. Cys-26 is lipidated: S-diacylglycerol cysteine. The region spanning 143 to 237 is the Lipoprotein-associated type-17 domain; it reads RLKDTFDFKL…LLEVSGFKSN (95 aa).

It is found in the cell membrane. The chain is Membrane-associated lipoprotein from Ureaplasma parvum serovar 3 (strain ATCC 700970).